We begin with the raw amino-acid sequence, 400 residues long: Lysophospholipid transporter LplT (400 aa).

Helical transmembrane passes span 19–39, 53–73, 91–111, 139–159, 164–184, 195–213, 227–247, 257–277, 281–301, 304–324, 352–372, and 373–393; these read VIVA…ATLA, VLQM…GQIA, AGAA…LVGI, LMEA…GVLA, IAAL…NLFI, SWRL…VVLW, LFWG…PVAL, YLNA…AKLV, TVSR…IFSL, ALLP…FFVV, NSAM…GVPA, and VAIG…LWIW.

This sequence belongs to the major facilitator superfamily. LplT (TC 2.A.1.42) family.

The protein resides in the cell inner membrane. Functionally, catalyzes the facilitated diffusion of 2-acyl-glycero-3-phosphoethanolamine (2-acyl-GPE) into the cell. This chain is Lysophospholipid transporter LplT, found in Salmonella heidelberg (strain SL476).